A 494-amino-acid polypeptide reads, in one-letter code: Flap endonuclease 1 (494 aa).

Residues 1–106 (MGIKGLIPFL…KTLEKRRQQR (106 aa)) form an N-domain region. Residue Asp34 coordinates Mg(2+). DNA-binding residues include Arg47 and Arg72. Mg(2+) contacts are provided by Asp88, Glu160, Glu162, Asp181, and Asp183. The segment at 124–253 (SVKKLVGRTV…KTAYSLVKKY (130 aa)) is I-domain. Residue Glu160 coordinates DNA. DNA is bound by residues Gly231 and Asp233. Asp233 serves as a coordination point for Mg(2+). Residues 330–338 (IQTSLLSFL) form an interaction with PCNA region. Disordered stretches follow at residues 341–382 (PQHN…ESST) and 395–426 (LFCE…ENET). Residues 408-426 (DRGRVDKNEDLFKKSENET) are compositionally biased toward basic and acidic residues.

It belongs to the XPG/RAD2 endonuclease family. FEN1 subfamily. Interacts with PCNA. Three molecules of FEN1 bind to one PCNA trimer with each molecule binding to one PCNA monomer. PCNA stimulates the nuclease activity without altering cleavage specificity. Mg(2+) is required as a cofactor. In terms of processing, phosphorylated. Phosphorylation upon DNA damage induces relocalization to the nuclear plasma.

The protein resides in the nucleus. The protein localises to the nucleolus. It is found in the nucleoplasm. Its subcellular location is the mitochondrion. Its function is as follows. Structure-specific nuclease with 5'-flap endonuclease and 5'-3' exonuclease activities involved in DNA replication and repair. During DNA replication, cleaves the 5'-overhanging flap structure that is generated by displacement synthesis when DNA polymerase encounters the 5'-end of a downstream Okazaki fragment. It enters the flap from the 5'-end and then tracks to cleave the flap base, leaving a nick for ligation. Also involved in the long patch base excision repair (LP-BER) pathway, by cleaving within the apurinic/apyrimidinic (AP) site-terminated flap. Acts as a genome stabilization factor that prevents flaps from equilibrating into structures that lead to duplications and deletions. Also possesses 5'-3' exonuclease activity on nicked or gapped double-stranded DNA, and exhibits RNase H activity. Also involved in replication and repair of rDNA and in repairing mitochondrial DNA. The chain is Flap endonuclease 1 from Theileria parva (East coast fever infection agent).